Here is a 154-residue protein sequence, read N- to C-terminus: Peptide methionine sulfoxide reductase MsrB (154 aa).

Residues 28–150 (DQQWREQLSE…NSVSLIFNKI (123 aa)) form the MsrB domain. The Zn(2+) site is built by Cys67, Cys70, Cys116, and Cys119. Cys139 serves as the catalytic Nucleophile.

It belongs to the MsrB Met sulfoxide reductase family. Zn(2+) serves as cofactor.

It carries out the reaction L-methionyl-[protein] + [thioredoxin]-disulfide + H2O = L-methionyl-(R)-S-oxide-[protein] + [thioredoxin]-dithiol. This chain is Peptide methionine sulfoxide reductase MsrB, found in Vibrio vulnificus (strain YJ016).